A 332-amino-acid polypeptide reads, in one-letter code: Endonuclease 8-like 2 (332 aa).

The active-site Schiff-base intermediate with DNA is Pro-2. Catalysis depends on Glu-3, which acts as the Proton donor. The active-site Proton donor; for beta-elimination activity is Lys-50. N6-acetyllysine is present on Lys-50. The segment at Asp-59–Asp-121 is disordered. At Ser-68 the chain carries Phosphoserine. The segment covering Pro-74 to Ala-84 has biased composition (basic and acidic residues). Positions Gly-94–Ser-104 are enriched in polar residues. At Lys-154 the chain carries N6-acetyllysine. Residue Asn-231 coordinates DNA. An FPG-type zinc finger spans residues Gln-284 to Pro-320. Residue Arg-310 is the Proton donor; for delta-elimination activity of the active site.

It belongs to the FPG family. Binds EP300. As to expression, detected in testis, skeletal muscle, heart, brain, placenta, lung, pancreas, kidney and liver.

The protein localises to the nucleus. It catalyses the reaction 2'-deoxyribonucleotide-(2'-deoxyribose 5'-phosphate)-2'-deoxyribonucleotide-DNA = a 3'-end 2'-deoxyribonucleotide-(2,3-dehydro-2,3-deoxyribose 5'-phosphate)-DNA + a 5'-end 5'-phospho-2'-deoxyribonucleoside-DNA + H(+). Its activity is regulated as follows. Acetylation of Lys-50 leads to loss of DNA nicking activity. Acetylation of Lys-154 has no effect. Functionally, involved in base excision repair of DNA damaged by oxidation or by mutagenic agents. Has DNA glycosylase activity towards 5-hydroxyuracil and other oxidized derivatives of cytosine with a preference for mismatched double-stranded DNA (DNA bubbles). Has low or no DNA glycosylase activity towards thymine glycol, 2-hydroxyadenine, hypoxanthine and 8-oxoguanine. Has AP (apurinic/apyrimidinic) lyase activity and introduces nicks in the DNA strand. Cleaves the DNA backbone by beta-delta elimination to generate a single-strand break at the site of the removed base with both 3'- and 5'-phosphates. The chain is Endonuclease 8-like 2 (NEIL2) from Homo sapiens (Human).